We begin with the raw amino-acid sequence, 321 residues long: Lipoyl synthase (321 aa).

Residues cysteine 68, cysteine 73, cysteine 79, cysteine 94, cysteine 98, cysteine 101, and serine 308 each contribute to the [4Fe-4S] cluster site. The Radical SAM core domain maps to phenylalanine 80 to threonine 297.

This sequence belongs to the radical SAM superfamily. Lipoyl synthase family. The cofactor is [4Fe-4S] cluster.

The protein localises to the cytoplasm. It catalyses the reaction [[Fe-S] cluster scaffold protein carrying a second [4Fe-4S](2+) cluster] + N(6)-octanoyl-L-lysyl-[protein] + 2 oxidized [2Fe-2S]-[ferredoxin] + 2 S-adenosyl-L-methionine + 4 H(+) = [[Fe-S] cluster scaffold protein] + N(6)-[(R)-dihydrolipoyl]-L-lysyl-[protein] + 4 Fe(3+) + 2 hydrogen sulfide + 2 5'-deoxyadenosine + 2 L-methionine + 2 reduced [2Fe-2S]-[ferredoxin]. It functions in the pathway protein modification; protein lipoylation via endogenous pathway; protein N(6)-(lipoyl)lysine from octanoyl-[acyl-carrier-protein]: step 2/2. Catalyzes the radical-mediated insertion of two sulfur atoms into the C-6 and C-8 positions of the octanoyl moiety bound to the lipoyl domains of lipoate-dependent enzymes, thereby converting the octanoylated domains into lipoylated derivatives. The polypeptide is Lipoyl synthase (Shewanella loihica (strain ATCC BAA-1088 / PV-4)).